The following is a 201-amino-acid chain: Retinol binding protein 4 (201 aa).

Positions Met1–Ala18 are cleaved as a signal peptide. Intrachain disulfides connect Cys22–Cys178, Cys88–Cys192, and Cys138–Cys147. Gln116 is a substrate binding site. Arg139 carries the omega-N-methylarginine modification.

It belongs to the calycin superfamily. Lipocalin family. As to quaternary structure, interacts with TTR. Interaction with TTR prevents its loss by filtration through the kidney glomeruli. Interacts with STRA6. Highly expressed in liver. Also expressed in adipose tissue. Expressed by endometrium from days 16-25 and by unattached chorioallantois from days 30-36 during pregnancy.

It is found in the secreted. In terms of biological role, retinol-binding protein that mediates retinol transport in blood plasma. Delivers retinol from the liver stores to the peripheral tissues. Transfers the bound all-trans retinol to STRA6, that then facilitates retinol transport across the cell membrane. This is Retinol binding protein 4 from Felis catus (Cat).